Here is a 252-residue protein sequence, read N- to C-terminus: Phosphate import ATP-binding protein PstB (252 aa).

The region spanning 6 to 247 (ITIEKLNLYY…PKDERTEKYI (242 aa)) is the ABC transporter domain. 38 to 45 (GPSGCGKS) lines the ATP pocket.

Belongs to the ABC transporter superfamily. Phosphate importer (TC 3.A.1.7) family. The complex is composed of two ATP-binding proteins (PstB), two transmembrane proteins (PstC and PstA) and a solute-binding protein (PstS).

It localises to the cell membrane. The enzyme catalyses phosphate(out) + ATP + H2O = ADP + 2 phosphate(in) + H(+). Part of the ABC transporter complex PstSACB involved in phosphate import. Responsible for energy coupling to the transport system. The polypeptide is Phosphate import ATP-binding protein PstB (Lactobacillus delbrueckii subsp. bulgaricus (strain ATCC 11842 / DSM 20081 / BCRC 10696 / JCM 1002 / NBRC 13953 / NCIMB 11778 / NCTC 12712 / WDCM 00102 / Lb 14)).